The following is a 466-amino-acid chain: Ceramide glucosyltransferase 1 (466 aa).

A helical membrane pass occupies residues 70-90; it reads LALSGCIFVSVLYLVHIIAFF. Residue Asp-148 is a short sequence motif, D1. Asp-200 is a short sequence motif (D2). Position 294 (Asp-294) is a short sequence motif, D3. Asp-294 (proton acceptor) is an active-site residue. The (Q/R)XXRW motif lies at 330 to 334; the sequence is RIGRW. The next 2 helical transmembrane spans lie at 354-374 and 403-423; these read CVTS…YSVY and TPFL…FIFI.

This sequence belongs to the glycosyltransferase 2 family. In terms of tissue distribution, expressed in excretory canals, pharyngeal intestinal valve, intestine and intestinal rectal valve.

Its subcellular location is the membrane. The catalysed reaction is an N-acylsphing-4-enine + UDP-alpha-D-glucose = a beta-D-glucosyl-(1&lt;-&gt;1')-N-acylsphing-4-enine + UDP + H(+). It carries out the reaction an N-acyl-15-methylhexadecasphing-4-enine + UDP-alpha-D-glucose = an N-acyl-1-beta-D-glucosyl-15-methylhexadecasphing-4-enine + UDP + H(+). The protein operates within lipid metabolism; sphingolipid metabolism. Functionally, catalyzes the first glycosylation step in glycosphingolipid biosynthesis, the transfer of glucose to ceramide to produce glucosylceramides (GlcCer). GlcCer are known to contribute to the physical properties and physiological functions of membranes and may regulate signal transduction. Only branched-chain sphingoid bases like 15-methylhexadecasphing-4-enine are used for generating complex sphingolipids in Caenorhabditis elegans. Together with cgt-3, plays a role in the trafficking of proteins such as mig-14 to the cell membrane in intestinal cells. The chain is Ceramide glucosyltransferase 1 from Caenorhabditis elegans.